The following is a 565-amino-acid chain: Sulfite reductase [NADPH] hemoprotein beta-component (565 aa).

Residues cysteine 429, cysteine 435, cysteine 474, and cysteine 478 each contribute to the [4Fe-4S] cluster site. Cysteine 478 is a siroheme binding site.

Belongs to the nitrite and sulfite reductase 4Fe-4S domain family. In terms of assembly, alpha(8)-beta(8). The alpha component is a flavoprotein, the beta component is a hemoprotein. Requires siroheme as cofactor. [4Fe-4S] cluster serves as cofactor.

The catalysed reaction is hydrogen sulfide + 3 NADP(+) + 3 H2O = sulfite + 3 NADPH + 4 H(+). The protein operates within sulfur metabolism; hydrogen sulfide biosynthesis; hydrogen sulfide from sulfite (NADPH route): step 1/1. Functionally, component of the sulfite reductase complex that catalyzes the 6-electron reduction of sulfite to sulfide. This is one of several activities required for the biosynthesis of L-cysteine from sulfate. This Shewanella sp. (strain MR-7) protein is Sulfite reductase [NADPH] hemoprotein beta-component.